A 160-amino-acid polypeptide reads, in one-letter code: Putative antiporter subunit mnhE2 (160 aa).

3 helical membrane-spanning segments follow: residues 23–43, 55–75, and 100–120; these read FKFT…YILH, IWVA…SSIS, and SNWA…STVI.

It belongs to the CPA3 antiporters (TC 2.A.63) subunit E family. As to quaternary structure, may form a heterooligomeric complex that consists of seven subunits: mnhA2, mnhB2, mnhC2, mnhD2, mnhE2, mnhF2 and mnhG2.

Its subcellular location is the cell membrane. This Staphylococcus epidermidis (strain ATCC 35984 / DSM 28319 / BCRC 17069 / CCUG 31568 / BM 3577 / RP62A) protein is Putative antiporter subunit mnhE2 (mnhE2).